We begin with the raw amino-acid sequence, 385 residues long: MSDIKQMIGKTFMEIADAIETGSFAGKVKVGITTLGSEHGVENLVKGAELAAKDAAGFDIVLIGPKVETSLEVVEVATEEEAHKKMEELLDSGYIHSCVTVHYNFPIGVSTVGRVVTPGMGKEMFIATTTGTSAAQRVEAMVRNALYGIITAKSMGIENPTVGILNLDGARAVERALKELAGNGYPITFAESLRADGGSVMRGNDLLGGAADVMVTDSLTGNIMMKVFSSYTTGGSYEGLGYGYGPGIGDGYNRTILILSRASGVPVAANAIKYAAKLAQNNVKAIAAAEFKAAKAAGLESILAGLSKDTKKASTEEEVKMPPKEVVTGTISGVDVMDLEDAQKVLWKAGIYAESGMGCTGPIVMVNEAKVEEAAKILKDAGIVA.

The active site involves cysteine 359.

In terms of assembly, heterooctamer of four alpha and four beta subunits. Component of the glycine, sarcosine and betaine reductase complexes, together with proteins A and B.

It catalyses the reaction acetyl phosphate + [thioredoxin]-disulfide + NH4(+) + H2O = [thioredoxin]-dithiol + glycine + phosphate + H(+). The catalysed reaction is acetyl phosphate + methylamine + [thioredoxin]-disulfide + H2O = sarcosine + [thioredoxin]-dithiol + phosphate + H(+). The enzyme catalyses acetyl phosphate + trimethylamine + [thioredoxin]-disulfide + H2O = glycine betaine + [thioredoxin]-dithiol + phosphate + H(+). Functionally, in the first step of glycine, betaine and sarcosine reductases, the substrate is bound to component PB via a Schiff base intermediate. Then the PB-activated substrate is nucleophilically attacked by the selenol anion of component PA to transform it to a carboxymethylated selenoether and the respective amine. By action of component PC, acetyl phosphate is formed, leaving component PA in its oxidized state. Finally component PA becomes reduced by the thioredoxin system to start a new catalytic cycle of reductive deamination. The sequence is that of Glycine/sarcosine/betaine reductase complex component C subunit alpha (grdD) from Peptoclostridium acidaminophilum (Eubacterium acidaminophilum).